The chain runs to 170 residues: Putative 3-methyladenine DNA glycosylase (170 aa).

Belongs to the DNA glycosylase MPG family.

The sequence is that of Putative 3-methyladenine DNA glycosylase from Sodalis glossinidius.